The primary structure comprises 583 residues: 2-succinyl-5-enolpyruvyl-6-hydroxy-3-cyclohexene-1-carboxylate synthase (583 aa).

This sequence belongs to the TPP enzyme family. MenD subfamily. Homodimer. Mg(2+) serves as cofactor. The cofactor is Mn(2+). It depends on thiamine diphosphate as a cofactor.

The enzyme catalyses isochorismate + 2-oxoglutarate + H(+) = 5-enolpyruvoyl-6-hydroxy-2-succinyl-cyclohex-3-ene-1-carboxylate + CO2. It functions in the pathway quinol/quinone metabolism; 1,4-dihydroxy-2-naphthoate biosynthesis; 1,4-dihydroxy-2-naphthoate from chorismate: step 2/7. It participates in quinol/quinone metabolism; menaquinone biosynthesis. Its function is as follows. Catalyzes the thiamine diphosphate-dependent decarboxylation of 2-oxoglutarate and the subsequent addition of the resulting succinic semialdehyde-thiamine pyrophosphate anion to isochorismate to yield 2-succinyl-5-enolpyruvyl-6-hydroxy-3-cyclohexene-1-carboxylate (SEPHCHC). This Chlorobium limicola (strain DSM 245 / NBRC 103803 / 6330) protein is 2-succinyl-5-enolpyruvyl-6-hydroxy-3-cyclohexene-1-carboxylate synthase.